Consider the following 391-residue polypeptide: Phosphoglycerate kinase (391 aa).

Substrate-binding positions include 21-23, Arg36, 59-62, Arg113, and Arg146; these read DLN and HLGR. ATP contacts are provided by residues Lys197, Glu319, and 345 to 348; that span reads GGDT.

Belongs to the phosphoglycerate kinase family. As to quaternary structure, monomer.

The protein localises to the cytoplasm. The catalysed reaction is (2R)-3-phosphoglycerate + ATP = (2R)-3-phospho-glyceroyl phosphate + ADP. It participates in carbohydrate degradation; glycolysis; pyruvate from D-glyceraldehyde 3-phosphate: step 2/5. This is Phosphoglycerate kinase from Shewanella sediminis (strain HAW-EB3).